Here is a 94-residue protein sequence, read N- to C-terminus: MFTINAEVRKEQGKGASRRLRAANKFPAIIYGGKEAPLAIELDHDKVMNIQAKAEFYSEVLTIVVDGKEIKVKAQDVQRHPYKPKLQHIDFVRA.

The protein belongs to the bacterial ribosomal protein bL25 family. As to quaternary structure, part of the 50S ribosomal subunit; part of the 5S rRNA/L5/L18/L25 subcomplex. Contacts the 5S rRNA. Binds to the 5S rRNA independently of L5 and L18.

Its function is as follows. This is one of the proteins that binds to the 5S RNA in the ribosome where it forms part of the central protuberance. The chain is Large ribosomal subunit protein bL25 from Escherichia coli O157:H7.